A 135-amino-acid chain; its full sequence is Ribonuclease VapC35 (135 aa).

The PINc domain occupies 2 to 123; that stretch reads IYLETSALVK…DNRLKEAAEA (122 aa). Mg(2+)-binding residues include Glu-5 and Asp-91.

Belongs to the PINc/VapC protein family. The cofactor is Mg(2+).

Functionally, toxic component of a type II toxin-antitoxin (TA) system. An RNase. Its toxic effect is neutralized by coexpression with cognate antitoxin VapB35. The protein is Ribonuclease VapC35 of Mycobacterium tuberculosis (strain CDC 1551 / Oshkosh).